The chain runs to 247 residues: uncharacterized protein (247 aa).

The segment at 225–247 (LASAPVPPSGSGNSGHRRANLGL) is disordered.

This is an uncharacterized protein from Methanocaldococcus jannaschii (strain ATCC 43067 / DSM 2661 / JAL-1 / JCM 10045 / NBRC 100440) (Methanococcus jannaschii).